The primary structure comprises 360 residues: MNKITFMGVELEEQGPSDLIVKALGKSIKLMDLETFIDTTGFEKDPIMNDYFWQIMVTKQRTHLSAMLLQCLGYEGEFRVQQQHFKRFLKSNNIHPLELTSSDPDIKNYPTIQDEMKLLKPNVISNRKWLIVEPREFKKVIMKLNTKHGDRIREYYLCLEELLRLYLEYCVYFKEREAKLQITTLEQKLEQMNITMIEMKEEMNLSMEEHADKLDTLVDQNEELKLDVSEANEKLETVTHKLGIAVEDRSPRLEQKPLRERFVLFKRNVKNARFQYYAIRGQSIYVNGRLTLYNERYPNLEIIIDIFCQPNPRNLFLRFKNYVKDDERFNFAGNNVECDITYESIMKEIFEKLNEEKRNV.

Positions 173-243 (FKEREAKLQI…KLETVTHKLG (71 aa)) form a coiled coil.

This Acheta domesticus (House cricket) protein is Putative MSV199 domain-containing protein 212L.